We begin with the raw amino-acid sequence, 232 residues long: Ureidoacrylate amidohydrolase RutB (232 aa).

Catalysis depends on aspartate 26, which acts as the Proton acceptor. The active site involves lysine 135. The active-site Nucleophile is cysteine 168.

The protein belongs to the isochorismatase family. RutB subfamily.

The enzyme catalyses (Z)-3-ureidoacrylate + H2O + H(+) = (Z)-3-aminoacrylate + NH4(+) + CO2. It catalyses the reaction (Z)-3-ureidoacrylate + H2O = (Z)-3-aminoacrylate + carbamate + H(+). It carries out the reaction (Z)-2-methylureidoacrylate + H2O + H(+) = (Z)-2-methylaminoacrylate + NH4(+) + CO2. Its function is as follows. Hydrolyzes ureidoacrylate to form aminoacrylate and carbamate. The carbamate hydrolyzes spontaneously, thereby releasing one of the nitrogen atoms of the pyrimidine ring as ammonia and one of its carbon atoms as CO2. The polypeptide is Ureidoacrylate amidohydrolase RutB (Cronobacter turicensis (strain DSM 18703 / CCUG 55852 / LMG 23827 / z3032)).